Here is a 350-residue protein sequence, read N- to C-terminus: Isopentenyl-diphosphate delta-isomerase (350 aa).

Position 15 to 16 (15 to 16) interacts with substrate; that stretch reads RK. FMN is bound by residues Ser-73, 74–76, Ser-104, and Asn-132; that span reads SMT. 104-106 is a binding site for substrate; it reads SQR. Substrate is bound at residue Gln-167. Position 168 (Glu-168) interacts with Mg(2+). Residues Lys-199, Thr-229, 279–281, and 300–301 each bind FMN; these read GLR and AM.

It belongs to the IPP isomerase type 2 family. As to quaternary structure, homooctamer. Dimer of tetramers. FMN serves as cofactor. The cofactor is NADPH. Requires Mg(2+) as cofactor.

The protein localises to the cytoplasm. It carries out the reaction isopentenyl diphosphate = dimethylallyl diphosphate. In terms of biological role, involved in the biosynthesis of isoprenoids. Catalyzes the 1,3-allylic rearrangement of the homoallylic substrate isopentenyl (IPP) to its allylic isomer, dimethylallyl diphosphate (DMAPP). This is Isopentenyl-diphosphate delta-isomerase from Nostoc sp. (strain PCC 7120 / SAG 25.82 / UTEX 2576).